The following is a 325-amino-acid chain: Acetyl-coenzyme A carboxylase carboxyl transferase subunit alpha (325 aa).

The region spanning 38–292 (RLEDRLAKLQ…DETLKQSLKT (255 aa)) is the CoA carboxyltransferase C-terminal domain.

The protein belongs to the AccA family. Acetyl-CoA carboxylase is a heterohexamer composed of biotin carboxyl carrier protein (AccB), biotin carboxylase (AccC) and two subunits each of ACCase subunit alpha (AccA) and ACCase subunit beta (AccD).

Its subcellular location is the cytoplasm. It carries out the reaction N(6)-carboxybiotinyl-L-lysyl-[protein] + acetyl-CoA = N(6)-biotinyl-L-lysyl-[protein] + malonyl-CoA. It functions in the pathway lipid metabolism; malonyl-CoA biosynthesis; malonyl-CoA from acetyl-CoA: step 1/1. Its activity is regulated as follows. Inhibited by pyrrolidine dione antibiotics moiramide B (CPD1) and CPD2. Component of the acetyl coenzyme A carboxylase (ACC) complex. First, biotin carboxylase catalyzes the carboxylation of biotin on its carrier protein (BCCP) and then the CO(2) group is transferred by the carboxyltransferase to acetyl-CoA to form malonyl-CoA. The polypeptide is Acetyl-coenzyme A carboxylase carboxyl transferase subunit alpha (Bacillus subtilis (strain 168)).